The sequence spans 461 residues: MNERIRIREILAGTPAGTEVIVKGWVRTSRVGKGVAFLAVNDGSCLASLQVVAEPGLANYHELRGIGTGAAVAVRGIVAESPAAGQAVELHATKVVVVGGADEQYPLQKKRHTFEYLRTIAHLRPRSNTFGAVFRVRSSLAQAVHRFFAERGFLYVHTPIITTSDCEGAGELFRVTTLDPSAPPMADGAVDFSQDFFAAQAGLTVSGQLEGELFAQAFSDIYTFGPTFRAENSNTPRHAAEFWMIEPEMAFADLRDDAALAEDFFRYLCRHVLDNCAEDMAFFNEHVDRGLLARVEQVAGSSFAMMEYGVAIEHLKRAAVPFEYPVEWGLDLQTEHERYLTEQVVGGPVFVVNYPQEIKAFYMRRNDDGRTVAAMDLLVPKVGEIIGGSQREERYDLLESRMREGGIAPESLWWYLDSRRWGSTPHAGFGLGFERLIMYLTGMENIRDVIPFPRTPRHAEF.

The protein belongs to the class-II aminoacyl-tRNA synthetase family. In terms of assembly, homodimer.

The protein resides in the cytoplasm. It carries out the reaction tRNA(Asn) + L-asparagine + ATP = L-asparaginyl-tRNA(Asn) + AMP + diphosphate + H(+). The protein is Asparagine--tRNA ligase of Geobacter sulfurreducens (strain ATCC 51573 / DSM 12127 / PCA).